Consider the following 64-residue polypeptide: Short neurotoxin 1 (64 aa).

Cystine bridges form between C3-C26, C20-C43, C45-C56, and C57-C62.

Belongs to the three-finger toxin family. Short-chain subfamily. Type I alpha-neurotoxin sub-subfamily. In terms of tissue distribution, expressed by the venom gland.

Its subcellular location is the secreted. Functionally, binds to muscle nicotinic acetylcholine receptor (nAChR) and inhibit acetylcholine from binding to the receptor, thereby impairing neuromuscular transmission. This is Short neurotoxin 1 from Bungarus fasciatus (Banded krait).